Reading from the N-terminus, the 292-residue chain is Tetrahydromethanopterin:alpha-L-glutamate ligase (292 aa).

The ATP-grasp domain occupies 103–286 (SFLMEVHKIP…IAQNLIDEAL (184 aa)). ATP-binding positions include lysine 138, 176–188 (QEFVNNPNNVYRD), and arginine 204. Mg(2+) is bound by residues aspartate 247, glutamate 259, and asparagine 261. Residues aspartate 247, glutamate 259, and asparagine 261 each coordinate Mn(2+).

The protein belongs to the RimK family. MptN subfamily. In terms of assembly, homodimer. It depends on Mg(2+) as a cofactor. Mn(2+) is required as a cofactor.

The enzyme catalyses 5,6,7,8-tetrahydromethanopterin + L-glutamate + ATP = 5,6,7,8-tetrahydrosarcinapterin + ADP + phosphate + H(+). It participates in cofactor biosynthesis; 5,6,7,8-tetrahydrosarcinapterin biosynthesis. Functionally, catalyzes the ATP or GTP-dependent addition of one L-glutamate molecule to tetrahydromethanopterin, producing tetrahydrosarcinapterin. The chain is Tetrahydromethanopterin:alpha-L-glutamate ligase (mptN) from Methanococcus maripaludis (strain DSM 14266 / JCM 13030 / NBRC 101832 / S2 / LL).